The chain runs to 77 residues: P fimbrial regulatory protein KS71A (77 aa).

The sequence is that of P fimbrial regulatory protein KS71A (KS71A) from Escherichia coli.